Reading from the N-terminus, the 535-residue chain is CTP synthase (535 aa).

Residues 1–267 (MTKYIFVTGG…DQIVCDHLKL (267 aa)) are amidoligase domain. Residue serine 13 participates in CTP binding. Serine 13 is a binding site for UTP. 14-19 (SLGKGI) is an ATP binding site. Position 54 (tyrosine 54) interacts with L-glutamine. Residue aspartate 71 participates in ATP binding. Mg(2+)-binding residues include aspartate 71 and glutamate 141. CTP-binding positions include 148 to 150 (DIE), 188 to 193 (KTKPTQ), and lysine 224. Residues 188 to 193 (KTKPTQ) and lysine 224 each bind UTP. Residue 240–242 (RDA) coordinates ATP. One can recognise a Glutamine amidotransferase type-1 domain in the interval 292–534 (KIALVGKYVE…VKASITNKES (243 aa)). Glycine 354 contributes to the L-glutamine binding site. Cysteine 381 functions as the Nucleophile; for glutamine hydrolysis in the catalytic mechanism. L-glutamine contacts are provided by residues 382–385 (LGMQ), glutamate 405, and arginine 462. Active-site residues include histidine 507 and glutamate 509.

This sequence belongs to the CTP synthase family. Homotetramer.

The enzyme catalyses UTP + L-glutamine + ATP + H2O = CTP + L-glutamate + ADP + phosphate + 2 H(+). The catalysed reaction is L-glutamine + H2O = L-glutamate + NH4(+). It catalyses the reaction UTP + NH4(+) + ATP = CTP + ADP + phosphate + 2 H(+). Its pathway is pyrimidine metabolism; CTP biosynthesis via de novo pathway; CTP from UDP: step 2/2. With respect to regulation, allosterically activated by GTP, when glutamine is the substrate; GTP has no effect on the reaction when ammonia is the substrate. The allosteric effector GTP functions by stabilizing the protein conformation that binds the tetrahedral intermediate(s) formed during glutamine hydrolysis. Inhibited by the product CTP, via allosteric rather than competitive inhibition. Its function is as follows. Catalyzes the ATP-dependent amination of UTP to CTP with either L-glutamine or ammonia as the source of nitrogen. Regulates intracellular CTP levels through interactions with the four ribonucleotide triphosphates. This chain is CTP synthase, found in Bacillus thuringiensis subsp. konkukian (strain 97-27).